Here is a 236-residue protein sequence, read N- to C-terminus: (5-formylfuran-3-yl)methyl phosphate synthase (236 aa).

Catalysis depends on Lys27, which acts as the Schiff-base intermediate with substrate. The active-site Proton acceptor is Lys85.

Belongs to the MfnB family.

The enzyme catalyses 2 D-glyceraldehyde 3-phosphate = 4-(hydroxymethyl)-2-furancarboxaldehyde phosphate + phosphate + 2 H2O. It participates in cofactor biosynthesis; methanofuran biosynthesis. Its function is as follows. Catalyzes the formation of 4-(hydroxymethyl)-2-furancarboxaldehyde phosphate (4-HFC-P) from two molecules of glyceraldehyde-3-P (GA-3-P). The protein is (5-formylfuran-3-yl)methyl phosphate synthase of Methanococcus maripaludis (strain DSM 14266 / JCM 13030 / NBRC 101832 / S2 / LL).